We begin with the raw amino-acid sequence, 132 residues long: Small ribosomal subunit protein uS8 (132 aa).

The protein belongs to the universal ribosomal protein uS8 family. In terms of assembly, part of the 30S ribosomal subunit. Contacts proteins S5 and S12.

One of the primary rRNA binding proteins, it binds directly to 16S rRNA central domain where it helps coordinate assembly of the platform of the 30S subunit. The polypeptide is Small ribosomal subunit protein uS8 (Rhizobium johnstonii (strain DSM 114642 / LMG 32736 / 3841) (Rhizobium leguminosarum bv. viciae)).